Here is a 430-residue protein sequence, read N- to C-terminus: Tektin-2 (430 aa).

Coiled coils occupy residues Lys80 to Leu162 and Asn225 to Asn382.

It belongs to the tektin family. As to quaternary structure, microtubule inner protein component of sperm flagellar doublet microtubules. May interact with CCDC172. In terms of processing, tyrosine phosphorylated. Post-translationally, ubiquitinated, leading to its degradation. Deubiquitinated by USP16, promoting its stability. As to expression, expressed at high levels in testis, trachea and fetal lung, and at lower levels in ovary, pituitary, adult lung, fetal brain and fetal kidney.

It localises to the cytoplasm. Its subcellular location is the cytoskeleton. The protein resides in the cilium axoneme. It is found in the flagellum axoneme. The protein localises to the microtubule organizing center. Functionally, microtubule inner protein (MIP) part of the dynein-decorated doublet microtubules (DMTs) in cilia and flagellar axoneme. Plays a key role in the assembly or attachment of the inner dynein arm to microtubules in sperm flagella and tracheal cilia. Forms filamentous polymers in the walls of ciliary and flagellar microtubules. The chain is Tektin-2 from Homo sapiens (Human).